The sequence spans 308 residues: Elongation factor Ts (308 aa).

The tract at residues 80-83 (TDFV) is involved in Mg(2+) ion dislocation from EF-Tu.

Belongs to the EF-Ts family.

The protein resides in the cytoplasm. Its function is as follows. Associates with the EF-Tu.GDP complex and induces the exchange of GDP to GTP. It remains bound to the aminoacyl-tRNA.EF-Tu.GTP complex up to the GTP hydrolysis stage on the ribosome. The protein is Elongation factor Ts of Methylobacterium radiotolerans (strain ATCC 27329 / DSM 1819 / JCM 2831 / NBRC 15690 / NCIMB 10815 / 0-1).